A 521-amino-acid polypeptide reads, in one-letter code: 2-isopropylmalate synthase (521 aa).

The region spanning 5–267 (VIIFDTTLRD…HTNIKHQEIH (263 aa)) is the Pyruvate carboxyltransferase domain. Asp-14, His-202, His-204, and Asn-238 together coordinate Mn(2+). The tract at residues 392–521 (KLNYLSVQSG…FAQKTVMETL (130 aa)) is regulatory domain.

Belongs to the alpha-IPM synthase/homocitrate synthase family. LeuA type 1 subfamily. Homodimer. It depends on Mn(2+) as a cofactor.

The protein resides in the cytoplasm. It carries out the reaction 3-methyl-2-oxobutanoate + acetyl-CoA + H2O = (2S)-2-isopropylmalate + CoA + H(+). It functions in the pathway amino-acid biosynthesis; L-leucine biosynthesis; L-leucine from 3-methyl-2-oxobutanoate: step 1/4. Catalyzes the condensation of the acetyl group of acetyl-CoA with 3-methyl-2-oxobutanoate (2-ketoisovalerate) to form 3-carboxy-3-hydroxy-4-methylpentanoate (2-isopropylmalate). In Tolumonas auensis (strain DSM 9187 / NBRC 110442 / TA 4), this protein is 2-isopropylmalate synthase.